The chain runs to 413 residues: 3-oxo-tetronate kinase (413 aa).

Residues serine 254, 354-357 (GGET), and glycine 397 contribute to the ATP site.

Belongs to the four-carbon acid sugar kinase family.

It catalyses the reaction 3-dehydro-L-erythronate + ATP = 3-dehydro-4-O-phospho-L-erythronate + ADP + H(+). It carries out the reaction 3-dehydro-D-erythronate + ATP = 3-dehydro-4-O-phospho-D-erythronate + ADP + H(+). Its function is as follows. Catalyzes the ATP-dependent phosphorylation of 3-oxo-tetronate to 3-oxo-tetronate 4-phosphate. The sequence is that of 3-oxo-tetronate kinase from Haemophilus influenzae (strain ATCC 51907 / DSM 11121 / KW20 / Rd).